We begin with the raw amino-acid sequence, 174 residues long: Ribosome maturation factor RimM (174 aa).

In terms of domain architecture, PRC barrel spans 97–171 (SDGEYYWCDL…RMTVSLPEGL (75 aa)).

This sequence belongs to the RimM family. As to quaternary structure, binds ribosomal protein uS19.

The protein resides in the cytoplasm. Functionally, an accessory protein needed during the final step in the assembly of 30S ribosomal subunit, possibly for assembly of the head region. Essential for efficient processing of 16S rRNA. May be needed both before and after RbfA during the maturation of 16S rRNA. It has affinity for free ribosomal 30S subunits but not for 70S ribosomes. In Geotalea daltonii (strain DSM 22248 / JCM 15807 / FRC-32) (Geobacter daltonii), this protein is Ribosome maturation factor RimM.